The primary structure comprises 417 residues: uncharacterized protein (417 aa).

10 helical membrane-spanning segments follow: residues I21–L41, L50–A70, L88–V108, S166–P186, M217–G237, L255–G275, L283–L303, I308–V328, A351–A371, and W373–I393.

Belongs to the major facilitator superfamily. TCR/Tet family.

It is found in the cell membrane. This is an uncharacterized protein from Bacillus subtilis (strain 168).